A 290-amino-acid polypeptide reads, in one-letter code: Outer dense fiber protein 4 (290 aa).

Ser28 is subject to Phosphoserine. 4 consecutive transmembrane segments (helical) span residues 44-64, 132-152, 164-184, and 201-221; these read AQVV…LMVF, ISFI…HLPY, LIGI…LLLF, and IGWS…CGIL. The tract at residues 262–290 is disordered; the sequence is ADILDPTQDDQKPLSSDNIALPPNPDTTD.

It is found in the membrane. Its function is as follows. Component of the outer dense fibers (ODF) of spermatozoa which could be involved in sperm tail structure, sperm movement and general organization of cellular cytoskeleton. The sequence is that of Outer dense fiber protein 4 (Odf4) from Rattus norvegicus (Rat).